Reading from the N-terminus, the 299-residue chain is MSMPVPQVVEVFAPAKINLTLHVTGQRPDGYHLLDSLVAFADVGDVLRLEPADVWQMKTVGPEAEAVPDGAENLVLKAAALLDGAPKAAFTLTKNLPVASGIGGGSADAAAAFRGLCAATPHHDPNNIDTQRRLLSLGADIPMCLHCVTARITGIGEEITPVAQFPALHAVLINPRVAVSTPAVFKAMKQRNNPPMPDIPPESCDVKDLVEWLRAQRNDMQEAATTLEPAIATVQAALEGHRACQLARMSGSGATCFGLFHTAQAAQQAARDLSRDYPQWWIRPTQLGSQAERAVPRLS.

Lys16 is an active-site residue. 97–107 lines the ATP pocket; it reads PVASGIGGGSA. The active site involves Asp140.

The protein belongs to the GHMP kinase family. IspE subfamily.

The catalysed reaction is 4-CDP-2-C-methyl-D-erythritol + ATP = 4-CDP-2-C-methyl-D-erythritol 2-phosphate + ADP + H(+). Its pathway is isoprenoid biosynthesis; isopentenyl diphosphate biosynthesis via DXP pathway; isopentenyl diphosphate from 1-deoxy-D-xylulose 5-phosphate: step 3/6. Catalyzes the phosphorylation of the position 2 hydroxy group of 4-diphosphocytidyl-2C-methyl-D-erythritol. This is 4-diphosphocytidyl-2-C-methyl-D-erythritol kinase from Roseobacter denitrificans (strain ATCC 33942 / OCh 114) (Erythrobacter sp. (strain OCh 114)).